The sequence spans 407 residues: BMP-like protein unc-129 (407 aa).

An N-terminal signal peptide occupies residues 1–18 (MRRLPIVLLLSVFSIANC). N-linked (GlcNAc...) asparagine glycans are attached at residues N27, N42, and N211. The tract at residues 252–283 (DDREPIKRKNGKKNSLSEEISSEDVWQGFGEE) is disordered. An N-linked (GlcNAc...) asparagine glycan is attached at N395.

The protein belongs to the TGF-beta family. As to quaternary structure, interacts with netrin receptor unc-5; the interaction is direct.

The protein resides in the secreted. It localises to the extracellular space. In terms of biological role, required for the migration of axonal growth-cones and distal tip cells (DTC) along the dorsal-ventral axis of the body wall. Acts cell nonautonomously and independently of the classical daf-4, sma-6 or daf-1 TGFbeta receptor signaling. During axon migration, facilitates long-range repulsive guidance of unc-6/netrin by enhancing unc-5-unc-40 signaling at the expense of unc-5 alone signaling, probably through direct interaction with receptor unc-5. Involved in cell-cell contact formation in sensory rays in the developing male tail, via a pathway involving plx-2 and mab-20/semaphorin-2A. This Caenorhabditis elegans protein is BMP-like protein unc-129.